Here is a 91-residue protein sequence, read N- to C-terminus: Insertion element IS1 7 protein InsA (91 aa).

This sequence belongs to the IS1 elements InsA family.

Absolutely required for transposition of IS1. The polypeptide is Insertion element IS1 7 protein InsA (insA7) (Escherichia coli (strain K12)).